The primary structure comprises 315 residues: Glutamyl-Q tRNA(Asp) synthetase (315 aa).

L-glutamate is bound by residues 12–16 (RFAPS) and glutamate 48. The 'HIGH' region motif lies at 15 to 25 (PSPSGPLHFGS). Residues cysteine 104, cysteine 106, tyrosine 124, and cysteine 128 each contribute to the Zn(2+) site. Residues tyrosine 181 and arginine 199 each contribute to the L-glutamate site. Positions 237–241 (KLSKQ) match the 'KMSKS' region motif. Residue lysine 240 coordinates ATP.

The protein belongs to the class-I aminoacyl-tRNA synthetase family. GluQ subfamily. Zn(2+) is required as a cofactor.

Its function is as follows. Catalyzes the tRNA-independent activation of glutamate in presence of ATP and the subsequent transfer of glutamate onto a tRNA(Asp). Glutamate is transferred on the 2-amino-5-(4,5-dihydroxy-2-cyclopenten-1-yl) moiety of the queuosine in the wobble position of the QUC anticodon. This is Glutamyl-Q tRNA(Asp) synthetase from Aromatoleum aromaticum (strain DSM 19018 / LMG 30748 / EbN1) (Azoarcus sp. (strain EbN1)).